A 316-amino-acid polypeptide reads, in one-letter code: tRNA-cytidine(32) 2-sulfurtransferase (316 aa).

A PP-loop motif motif is present at residues 45 to 50; that stretch reads SGGKDS. 3 residues coordinate [4Fe-4S] cluster: Cys-120, Cys-123, and Cys-211.

Belongs to the TtcA family. Homodimer. The cofactor is Mg(2+). Requires [4Fe-4S] cluster as cofactor.

The protein resides in the cytoplasm. The catalysed reaction is cytidine(32) in tRNA + S-sulfanyl-L-cysteinyl-[cysteine desulfurase] + AH2 + ATP = 2-thiocytidine(32) in tRNA + L-cysteinyl-[cysteine desulfurase] + A + AMP + diphosphate + H(+). It functions in the pathway tRNA modification. Functionally, catalyzes the ATP-dependent 2-thiolation of cytidine in position 32 of tRNA, to form 2-thiocytidine (s(2)C32). The sulfur atoms are provided by the cysteine/cysteine desulfurase (IscS) system. The sequence is that of tRNA-cytidine(32) 2-sulfurtransferase from Shewanella sediminis (strain HAW-EB3).